A 176-amino-acid chain; its full sequence is Envelope protein 167 (176 aa).

Residue Met-1 is a topological domain, intravirion. Residues 2 to 22 (YLVLLIAIILFITIILVIFLI) traverse the membrane as a helical segment. The Virion surface portion of the chain corresponds to 23-176 (SGLFYPEQNP…AVMAIPRKVL (154 aa)).

The protein belongs to the asfivirus envelope protein p22 family.

The protein localises to the virion membrane. Its subcellular location is the host cell membrane. This is Envelope protein 167 from African swine fever virus (isolate Warthog/Namibia/Wart80/1980) (ASFV).